The sequence spans 283 residues: Endochitinase At2g43620 (283 aa).

The first 28 residues, 1–28 (MATLRAMLKNAFILFLFTLTIMAKTVFS), serve as a signal peptide directing secretion. Residues 29–66 (QQCGTTGCAANLCCSRYGYCGTTDAYCGTGCRSGPCSS) form the Chitin-binding type-1 domain. Cystine bridges form between cysteine 31–cysteine 42, cysteine 36–cysteine 48, cysteine 41–cysteine 55, and cysteine 59–cysteine 64. Residues 88 to 283 (DTIENVVTPA…GITPGANLSC (196 aa)) form a catalytic region. Glutamate 150 (proton donor) is an active-site residue. Asparagine 280 carries N-linked (GlcNAc...) asparagine glycosylation.

It belongs to the glycosyl hydrolase 19 family. Chitinase class I subfamily.

It carries out the reaction Random endo-hydrolysis of N-acetyl-beta-D-glucosaminide (1-&gt;4)-beta-linkages in chitin and chitodextrins.. This chain is Endochitinase At2g43620, found in Arabidopsis thaliana (Mouse-ear cress).